Consider the following 177-residue polypeptide: MSRVGKAPIALPKGAEVNVAAGVLSVKGPLGTLSQPIHSLVKVNVENDTLTFAPADESREANALQGTMRALAANMVKGVTTGFERKLNLVGVGYRAQLQGAALKLQLGFSHDVIHEMPEGVKAETPTQTEIIIKGADKQKVGQVAAEVRAYRPPEPYKGKGVRYSDERVILKETKKK.

It belongs to the universal ribosomal protein uL6 family. As to quaternary structure, part of the 50S ribosomal subunit.

This protein binds to the 23S rRNA, and is important in its secondary structure. It is located near the subunit interface in the base of the L7/L12 stalk, and near the tRNA binding site of the peptidyltransferase center. This Cupriavidus pinatubonensis (strain JMP 134 / LMG 1197) (Cupriavidus necator (strain JMP 134)) protein is Large ribosomal subunit protein uL6.